The primary structure comprises 791 residues: Probable phosphoketolase (791 aa).

Belongs to the XFP family. It depends on thiamine diphosphate as a cofactor.

The protein is Probable phosphoketolase of Pseudomonas putida (strain ATCC 700007 / DSM 6899 / JCM 31910 / BCRC 17059 / LMG 24140 / F1).